We begin with the raw amino-acid sequence, 347 residues long: Probable dual-specificity RNA methyltransferase RlmN (347 aa).

The active-site Proton acceptor is the E91. Positions 97–327 constitute a Radical SAM core domain; the sequence is YKYGNSICVS…ATVRREMGSD (231 aa). C104 and C332 form a disulfide bridge. [4Fe-4S] cluster is bound by residues C111, C115, and C118. S-adenosyl-L-methionine is bound by residues 158 to 159, S190, 213 to 215, and N289; these read GE and SLH. The active-site S-methylcysteine intermediate is the C332.

Belongs to the radical SAM superfamily. RlmN family. [4Fe-4S] cluster is required as a cofactor.

The protein resides in the cytoplasm. The catalysed reaction is adenosine(2503) in 23S rRNA + 2 reduced [2Fe-2S]-[ferredoxin] + 2 S-adenosyl-L-methionine = 2-methyladenosine(2503) in 23S rRNA + 5'-deoxyadenosine + L-methionine + 2 oxidized [2Fe-2S]-[ferredoxin] + S-adenosyl-L-homocysteine. It catalyses the reaction adenosine(37) in tRNA + 2 reduced [2Fe-2S]-[ferredoxin] + 2 S-adenosyl-L-methionine = 2-methyladenosine(37) in tRNA + 5'-deoxyadenosine + L-methionine + 2 oxidized [2Fe-2S]-[ferredoxin] + S-adenosyl-L-homocysteine. In terms of biological role, specifically methylates position 2 of adenine 2503 in 23S rRNA and position 2 of adenine 37 in tRNAs. The chain is Probable dual-specificity RNA methyltransferase RlmN from Clostridium perfringens (strain 13 / Type A).